A 631-amino-acid polypeptide reads, in one-letter code: Nucleoside triphosphatase I (631 aa).

A Helicase ATP-binding domain is found at 42–204; that stretch reads FLGLDSMHSL…TMLVNLLRPG (163 aa). 55 to 62 contacts ATP; that stretch reads HETGVGKT. A DEXH box motif is present at residues 141-144; it reads DECH. The 166-residue stretch at 367-532 folds into the Helicase C-terminal domain; it reads KFIDVCLGIL…EFVQLFRVFK (166 aa). The binding to the cap-specific mRNA (nucleoside-2'-O-)-methyltransferase stretch occupies residues 457 to 524; the sequence is DIFILDMTWN…EIIQSKSKEF (68 aa).

Belongs to the helicase family. NPH I subfamily. Monomer. Interacts (via C-terminus) with RAP94/OPG109 (via N-terminus). Interacts with the cap-specific mRNA (nucleoside-2'-O-)-methyltransferase OPG102.

It is found in the virion. It catalyses the reaction a ribonucleoside 5'-triphosphate + H2O = a ribonucleoside 5'-diphosphate + phosphate + H(+). Functionally, DNA-dependent ATPase that acts as a 5' to 3' translocase on single-stranded DNA and thereby plays a role in transcription termination of viral early genes. Uses forward translocation in concert with the viral RNA polymerase RAP94/OPG109 subunit and the capping enzyme/VTF to catalyze release of UUUUUNU-containing nascent RNA from the elongation complex. In addition, acts as a positive elongation factor to assist transcription through problematic sequences. The sequence is that of Nucleoside triphosphatase I (OPG123) from Vaccinia virus (strain Copenhagen) (VACV).